The sequence spans 274 residues: MTKIWFITGSSRGLGLAIAEAALNNGDSVIATARKPEQLTNLVNKFGKERVFPVALDVTDNNQVLQAVKSGHEKFGRIDVVINNAGYANTAAVEDIDVDDFCAQVEANLMGVVYVSKAVLPILRQQKSGHIFQVSSLGGRIGAPGLSAYQSAKWAVGGFSTVLAQEVASFGIKITVLEPGGIRTDWAGSSMQVPTVSEPYQATVGAFAESLRKSSGSEVSIPSKIANIVLKVLGEKEPPLRLLVGPDAVEYAGKAAEVLSASDEKWRELSLASA.

Residues Leu14, Thr32, Asp57, Asn84, and Lys117 each contribute to the NADP(+) site. Catalysis depends on proton donor residues Ser135 and Tyr149. Residues Tyr149, Lys153, Ile182, and Thr184 each coordinate NADP(+). Lys153 functions as the Lowers pKa of active site Tyr in the catalytic mechanism.

It belongs to the short-chain dehydrogenases/reductases (SDR) family.

It functions in the pathway polyketide biosynthesis. In terms of biological role, oxidoreductase; part of the gene cluster B that mediates the biosynthesis of botcinic acid and its botcinin derivatives, acetate-derived polyketides that contribute to virulence when combined with the sesquiterpene botrydial. Botcinic acid and its derivatives have been shown to induce chlorosis and necrosis during host plant infection, but also have antifungal activities. Two polyketide synthases, BOA6 and BOA9, are involved in the biosynthesis of botcinins. BOA6 mediates the formation of the per-methylated tetraketide core by condensation of four units of malonyl-CoA with one unit of acetyl-CoA, which would be methylated in activated methylene groups to yield a bicyclic acid intermediate that could then either be converted to botrylactone derivatives or lose the starter acetate unit through a retro-Claisen type C-C bond cleavage to yield botcinin derivatives. The second polyketide synthase, BOA9, is probably required for the biosynthesis of the tetraketide side chain of botcinins. The methyltransferase (MT) domain within BOA6 is probably responsible for the incorporation of four methyl groups. The trans-enoyl reductase BOA5 might take over the enoyl reductase function of BOA6 that misses an ER domain. The monooxygenases BOA2, BOA3 and BOA4 might be involved in further hydroxylations at C4, C5 and C8, whereas BOA7, close to BOA9, could potentially be involved in the hydroxylation at C4 in the side chain of botcinins. This Botryotinia fuckeliana (strain B05.10) (Noble rot fungus) protein is Oxidoreductase BOA17.